The primary structure comprises 661 residues: Pentatricopeptide repeat-containing protein At3g04750, mitochondrial (661 aa).

The transit peptide at 1-18 directs the protein to the mitochondrion; sequence MCFVLLLRRGFRLFGTEC. PPR repeat units lie at residues 99–131, 132–163, 165–195, 196–230, 231–265, 268–298, 299–333, 334–366, 367–401, 402–432, 433–467, 468–498, and 504–539; these read NVFV…RVSP, DRQT…GCLS, GNYL…MPHP, DVSS…GIEP, DEYT…GPVY, NLIL…MKKK, DMRS…DLVS, WNSL…KVKP, DRVT…QLKG, DAFL…ATEK, DVAL…GVTP, NNVT…MKDK, and ETEH…PSQS. The type E motif stretch occupies residues 540–615; the sequence is MWGSILSACR…TAGYSSVVGV (76 aa). The type E(+) motif stretch occupies residues 616-647; sequence EGLHRFVAAEKQNHPRWTEIKRILQHLYNEMK.

The protein belongs to the PPR family. PCMP-E subfamily.

It is found in the mitochondrion. This chain is Pentatricopeptide repeat-containing protein At3g04750, mitochondrial (PCMP-E81), found in Arabidopsis thaliana (Mouse-ear cress).